We begin with the raw amino-acid sequence, 538 residues long: Tryptophan 7-halogenase PrnA (538 aa).

The FAD site is built by Gly-13, Thr-15, Ala-16, Ser-39, Ile-42, Ile-45, Glu-49, and Ala-50. Lys-79 is an active-site residue. Position 79 (Lys-79) interacts with 7-chloro-L-tryptophan. FAD-binding residues include Val-187 and Leu-337. Glu-346 contributes to the 7-chloro-L-tryptophan binding site. Residue Glu-346 coordinates L-tryptophan. Thr-348 and Gly-349 together coordinate chloride. Ile-350 is a binding site for FAD. Residues Tyr-443, Tyr-444, Glu-450, and Phe-454 each coordinate 7-chloro-L-tryptophan. L-tryptophan is bound by residues Tyr-443, Tyr-444, Glu-450, and Phe-454.

This sequence belongs to the flavin-dependent halogenase family. Bacterial tryptophan halogenase subfamily. Homodimer.

It catalyses the reaction L-tryptophan + FADH2 + chloride + O2 = 7-chloro-L-tryptophan + FAD + 2 H2O. The protein operates within antibiotic biosynthesis. In terms of biological role, involved in the biosynthesis of the antifungal antibiotic pyrrolnitrin. Catalyzes the chlorination of tryptophan (Trp) at C7 position to yield 7-chloro-L-tryptophan (7-CLT). The polypeptide is Tryptophan 7-halogenase PrnA (Pseudomonas fluorescens).